The sequence spans 89 residues: Small ribosomal subunit protein uS14A (89 aa).

This sequence belongs to the universal ribosomal protein uS14 family. In terms of assembly, part of the 30S ribosomal subunit. Contacts proteins S3 and S10.

Functionally, binds 16S rRNA, required for the assembly of 30S particles and may also be responsible for determining the conformation of the 16S rRNA at the A site. In Bacillus licheniformis (strain ATCC 14580 / DSM 13 / JCM 2505 / CCUG 7422 / NBRC 12200 / NCIMB 9375 / NCTC 10341 / NRRL NRS-1264 / Gibson 46), this protein is Small ribosomal subunit protein uS14A.